The sequence spans 387 residues: uncharacterized protein (387 aa).

Belongs to the geranylgeranyl reductase family. ChlP subfamily.

This is an uncharacterized protein from Methanocaldococcus jannaschii (strain ATCC 43067 / DSM 2661 / JAL-1 / JCM 10045 / NBRC 100440) (Methanococcus jannaschii).